We begin with the raw amino-acid sequence, 298 residues long: Tyrosine recombinase XerD (298 aa).

The Core-binding (CB) domain maps to 2 to 87; the sequence is KQDLARIEQF…AVRRLFQYLY (86 aa). The Tyr recombinase domain occupies 108–292; it reads RLPKDLSEAQ…ATERLRQLHQ (185 aa). Catalysis depends on residues R148, K172, H244, R247, and H270. Residue Y279 is the O-(3'-phospho-DNA)-tyrosine intermediate of the active site.

Belongs to the 'phage' integrase family. XerD subfamily. As to quaternary structure, forms a cyclic heterotetrameric complex composed of two molecules of XerC and two molecules of XerD, in which XerC interacts with XerD via its C-terminal region, XerD interacts with XerC via its C-terminal region and so on.

It localises to the cytoplasm. FtsK may regulate the catalytic switch between XerC and XerD in the heterotetrameric complex during the two steps of the recombination process. Its function is as follows. Site-specific tyrosine recombinase, which acts by catalyzing the cutting and rejoining of the recombining DNA molecules. Binds cooperatively to specific DNA consensus sequences that are separated from XerC binding sites by a short central region, forming the heterotetrameric XerC-XerD complex that recombines DNA substrates. The complex is essential to convert dimers of the bacterial chromosome into monomers to permit their segregation at cell division. It also contributes to the segregational stability of plasmids. In the complex XerD specifically exchanges the bottom DNA strands. This Escherichia coli O157:H7 protein is Tyrosine recombinase XerD.